The sequence spans 342 residues: Epoxide hydrolase srdG (342 aa).

One can recognise an AB hydrolase-1 domain in the interval 44 to 332 (ATVLLLHGWP…LIHTPEEVNK (289 aa)). Catalysis depends on D122, which acts as the Nucleophile. Catalysis depends on H320, which acts as the Proton acceptor.

The protein belongs to the AB hydrolase superfamily. Epoxide hydrolase family.

Functionally, highly reducing polyketide synthase; part of the gene cluster that mediates the biosynthesis of sordarial, a salicylic aldehyde structurally related to the phytotoxin pyriculol. The most interesting aspect of this pathway is formation of an aromatic product from the highly reducing polyketide synthase srdA. SrdA synthesizes a reduced polyketide chain from one molecule of acetyl-CoA and five molecules of malonyl-CoA. The polyketide chain is then reductively released as an aldehyde. The oxidoreductases srdC, srdD and srdE then oxidize one of the hydroxy groups to facilitate the intramolecular aldol condensation, followed by dehydration to yield a salicylic aldehyde. This aldehyde can undergo facile reduction by endogenous reductases to yield the alcohol 1-hydroxy-2-hydroxymethyl-3-pent-1,3-dienylbenzene. The flavin-dependent srdI counteract against the propensity of the aldehydes to be reduced under physiological conditions and is responsible for reoxidizing 1-hydroxy-2-hydroxymethyl-3-pent-1,3-dienylbenzene back to the salicylic aldehyde. This salicylic aldehyde is then selectively epoxidized by the cupin-domain-containing oxidoreductase srdB to yield the epoxide, which can be hydrolyzed stereoselectively by the hydrolase srdG to give the final product sordarial. The chain is Epoxide hydrolase srdG from Neurospora crassa (strain ATCC 24698 / 74-OR23-1A / CBS 708.71 / DSM 1257 / FGSC 987).